A 167-amino-acid polypeptide reads, in one-letter code: Phosphopantetheine adenylyltransferase (167 aa).

Ser10 is a binding site for substrate. Residues 10-11 (SF) and His18 contribute to the ATP site. Residues Lys42, Ala79, and Arg93 each coordinate substrate. ATP-binding positions include 94–96 (GLR), Glu104, and 129–135 (VGHITAT).

It belongs to the bacterial CoaD family. Homohexamer. The cofactor is Mg(2+).

The protein localises to the cytoplasm. It catalyses the reaction (R)-4'-phosphopantetheine + ATP + H(+) = 3'-dephospho-CoA + diphosphate. Its pathway is cofactor biosynthesis; coenzyme A biosynthesis; CoA from (R)-pantothenate: step 4/5. Functionally, reversibly transfers an adenylyl group from ATP to 4'-phosphopantetheine, yielding dephospho-CoA (dPCoA) and pyrophosphate. The polypeptide is Phosphopantetheine adenylyltransferase (Methylocella silvestris (strain DSM 15510 / CIP 108128 / LMG 27833 / NCIMB 13906 / BL2)).